Here is a 205-residue protein sequence, read N- to C-terminus: Glycerol-3-phosphate acyltransferase (205 aa).

At 1–3 (MSA) the chain is on the periplasmic side. Residues 4-24 (IAPGMILFAYLCGSISSAILV) form a helical membrane-spanning segment. Over 25–52 (CRLCGLPDPRTSGSGNPGATNVLRMGGK) the chain is Cytoplasmic. Residues 53-73 (GAALAVLIFDVLKGMLPVWGA) form a helical membrane-spanning segment. At 74 to 80 (YELGVSP) the chain is on the periplasmic side. Residues 81 to 101 (FWLGLIAIAACLGHIWPIFFG) form a helical membrane-spanning segment. Residues 102–111 (FKGGKGVATA) are Cytoplasmic-facing. A helical transmembrane segment spans residues 112-132 (FGAIAPIGWDLTGVMAGTWLL). Residues 133–137 (TVLLS) lie on the Periplasmic side of the membrane. A helical transmembrane segment spans residues 138–158 (GYSSLGAIVSALIAPFYVWWF). Topologically, residues 159-205 (KPQFTFPVSMLSCLILLRHHDNIQRLWRRQETKIWTKLKRKREKDPE) are cytoplasmic.

This sequence belongs to the PlsY family. In terms of assembly, probably interacts with PlsX.

It is found in the cell inner membrane. The enzyme catalyses sn-glycerol 3-phosphate + an acyl-CoA = a 1-acyl-sn-glycero-3-phosphate + CoA. It catalyses the reaction a fatty acyl-[ACP] + sn-glycerol 3-phosphate = a 1-acyl-sn-glycero-3-phosphate + holo-[ACP]. The protein operates within lipid metabolism; phospholipid metabolism. Catalyzes the transfer of an acyl group from acyl-ACP to glycerol-3-phosphate (G3P) to form lysophosphatidic acid (LPA). This enzyme can also utilize acyl-CoA as fatty acyl donor, but not acyl-PO(4). The protein is Glycerol-3-phosphate acyltransferase of Escherichia fergusonii (strain ATCC 35469 / DSM 13698 / CCUG 18766 / IAM 14443 / JCM 21226 / LMG 7866 / NBRC 102419 / NCTC 12128 / CDC 0568-73).